The primary structure comprises 286 residues: Polyamine aminopropyltransferase (286 aa).

The PABS domain occupies 3–240; sequence DLWYSESHAD…GHWLFGFASK (238 aa). Glutamine 32 provides a ligand contact to S-methyl-5'-thioadenosine. 2 residues coordinate spermidine: histidine 63 and aspartate 87. Residues glutamate 107 and 139 to 140 each bind S-methyl-5'-thioadenosine; that span reads DG. Residue aspartate 158 is the Proton acceptor of the active site. 158-161 is a binding site for spermidine; the sequence is DSTD. Proline 165 contributes to the S-methyl-5'-thioadenosine binding site.

It belongs to the spermidine/spermine synthase family. Homodimer or homotetramer.

Its subcellular location is the cytoplasm. The catalysed reaction is S-adenosyl 3-(methylsulfanyl)propylamine + putrescine = S-methyl-5'-thioadenosine + spermidine + H(+). It functions in the pathway amine and polyamine biosynthesis; spermidine biosynthesis; spermidine from putrescine: step 1/1. In terms of biological role, catalyzes the irreversible transfer of a propylamine group from the amino donor S-adenosylmethioninamine (decarboxy-AdoMet) to putrescine (1,4-diaminobutane) to yield spermidine. This is Polyamine aminopropyltransferase from Clostridium acetobutylicum (strain ATCC 824 / DSM 792 / JCM 1419 / IAM 19013 / LMG 5710 / NBRC 13948 / NRRL B-527 / VKM B-1787 / 2291 / W).